Consider the following 1390-residue polypeptide: Contactin (1390 aa).

The signal sequence occupies residues 1-18; the sequence is MLAKIGLLASILVLNLVG. Residues 25-67 form a disordered region; that stretch reads SENLPDPDPQSGQQPQNYQPSYNKDYSPRYNPLYTGQQSADPN. The span at 58 to 67 shows a compositional bias: polar residues; sequence YTGQQSADPN. 6 Ig-like C2-type domains span residues 362–463, 468–561, 576–656, 661–745, 756–843, and 848–939; these read PYFV…AHLN, MEFN…LRVT, PKVF…IYIN, PQFT…TSFS, PSFK…ARVI, and IRFI…TSVS. Asn-369 carries an N-linked (GlcNAc...) asparagine glycan. Intrachain disulfides connect Cys-388/Cys-446, Cys-489/Cys-540, Cys-593/Cys-640, and Cys-682/Cys-734. Asn-537, Asn-604, Asn-629, Asn-691, and Asn-774 each carry an N-linked (GlcNAc...) asparagine glycan. Intrachain disulfides connect Cys-779/Cys-827 and Cys-870/Cys-923. 3 N-linked (GlcNAc...) asparagine glycosylation sites follow: Asn-912, Asn-986, and Asn-991. Fibronectin type-III domains are found at residues 946–1048, 1053–1151, 1156–1254, and 1259–1357; these read APGG…TYED, APRN…SAED, APQK…TYRK, and PPSS…MGKT. N-linked (GlcNAc...) asparagine glycans are attached at residues Asn-1166, Asn-1171, and Asn-1307. Ala-1362 carries the GPI-anchor amidated alanine lipid modification. Residues 1363–1390 constitute a propeptide, removed in mature form; sequence NTRHGHNINTALILSTLLLISTFLYTSQ.

Belongs to the immunoglobulin superfamily. Contactin family. As to quaternary structure, forms a complex with Nrg and Nrx. Forms a complex composed of septa junction proteins Nrx-IV/Nrx, Tsf2/MTf, Cont and Nrg during late embryogenesis. Post-translationally, N-glycosylated. In terms of tissue distribution, expressed in ectodermally derived epithelial cells from stage 12. All these tissues, such as epidermis, hindgut, foregut, salivary glands and trachea, which contain pleated septate junctions. Expressed by ectodermally derived epithelial cells and along peripheral nerves. Not present in midline glial cells. Expressed in epithelial cells and glial cells of peripheral nerves.

It is found in the cell membrane. The protein localises to the cell junction. The protein resides in the septate junction. In terms of biological role, required for organization of septate junctions and paracellular barrier functions. Septate junctions, which are the equivalent of vertebrates tight junctions, are characterized by regular arrays of transverse structures that span the intermembrane space and form a physical barrier to diffusion. The polypeptide is Contactin (Cont) (Drosophila melanogaster (Fruit fly)).